The sequence spans 343 residues: MTTLTITRPDDWHIHLRDGAQLKDTVRDISRYMGRAIVMPNLVPPAIDTETALAYYDRIKAQVPAGSQFEPLMVLYLTDKTSPEEIRKAKASGKIVAAKLYPAGATTNSDSGVTDLKNIYPALEAMQEVGMLFLVHGEVTDSSIDIFDRERVFIENILSKIVADFPKLKIVLEHITTKDAVDFVTQASDNVAATITAHHLLYNRNHMLAGGIRPHFYCLPILKRNTHQQALLGAAASGNKKFFLGTDSAPHAKDRKEAACGCAGSYTAHAAIELYAEAFESVNALDKLEAFASFNGPDFYNLPRNSDTITLVKKSWDVPVSYPLGDNNVVPIRAGEQIDWQVE.

Residues histidine 13 and histidine 15 each coordinate Zn(2+). Residues 15-17 (HLR) and asparagine 41 contribute to the substrate site. 3 residues coordinate Zn(2+): lysine 99, histidine 136, and histidine 174. Lysine 99 carries the post-translational modification N6-carboxylysine. A substrate-binding site is contributed by histidine 136. Leucine 219 is a binding site for substrate. Aspartate 247 lines the Zn(2+) pocket. Aspartate 247 is a catalytic residue. Histidine 251 and alanine 263 together coordinate substrate.

The protein belongs to the metallo-dependent hydrolases superfamily. DHOase family. Class II DHOase subfamily. As to quaternary structure, homodimer. It depends on Zn(2+) as a cofactor.

The enzyme catalyses (S)-dihydroorotate + H2O = N-carbamoyl-L-aspartate + H(+). It participates in pyrimidine metabolism; UMP biosynthesis via de novo pathway; (S)-dihydroorotate from bicarbonate: step 3/3. Functionally, catalyzes the reversible cyclization of carbamoyl aspartate to dihydroorotate. This is Dihydroorotase from Shewanella sp. (strain ANA-3).